A 142-amino-acid polypeptide reads, in one-letter code: Large ribosomal subunit protein uL13 (142 aa).

Belongs to the universal ribosomal protein uL13 family. In terms of assembly, part of the 50S ribosomal subunit.

Its function is as follows. This protein is one of the early assembly proteins of the 50S ribosomal subunit, although it is not seen to bind rRNA by itself. It is important during the early stages of 50S assembly. This is Large ribosomal subunit protein uL13 from Bordetella petrii (strain ATCC BAA-461 / DSM 12804 / CCUG 43448).